The chain runs to 501 residues: Histone deacetylase 19 (501 aa).

Positions Arg-17–Gly-329 are histone deacetylase. Catalysis depends on His-149, which acts as the Proton donor/acceptor. The Zn(2+) site is built by Asp-184, His-186, and Asp-272. The tract at residues His-383–Thr-501 is disordered. Acidic residues predominate over residues Glu-397–Asp-407. Ser-416 bears the Phosphoserine mark. Basic and acidic residues-rich tracts occupy residues Asp-422–Glu-457 and Ala-479–Thr-488.

It belongs to the histone deacetylase family. HD type 1 subfamily. In terms of assembly, interacts with SIN3, SAP18 and TPR1. Interacts with CDKE-1, MED14 and LUG. Interacts with TPL. Interacts with AHL22. Zn(2+) is required as a cofactor. In terms of tissue distribution, highly expressed in leaves, stems, flowers and young siliques.

The protein resides in the nucleus. It catalyses the reaction N(6)-acetyl-L-lysyl-[histone] + H2O = L-lysyl-[histone] + acetate. Its function is as follows. Responsible for the deacetylation of lysine residues on the N-terminal part of the core histones (H2A, H2B, H3 and H4). Histone deacetylation gives a tag for epigenetic repression and plays an important role in transcriptional regulation, cell cycle progression and developmental events. Histone deacetylases act via the formation of large multiprotein complexes. HDA19 is involved in jasmonic acid and ethylene signaling of pathogen response. Part of a repressor complex including APETALA2 (AP2) and TOPLESS (TPL) that control the expression domains of numerous floral organ identity genes. Involved in negative regulation of salinity stress response. Represses the expression of stress tolerance-related genes, genes coding for late embryogenesis abundant (LEA) proteins that prevent protein aggregation, and positive regulators of abscisic acid (ABA) signaling, such as ABI5 and NAC019. The chain is Histone deacetylase 19 from Arabidopsis thaliana (Mouse-ear cress).